A 295-amino-acid chain; its full sequence is Ribosomal RNA small subunit methyltransferase A (295 aa).

Residues N40, V42, G67, E88, D118, and N135 each coordinate S-adenosyl-L-methionine.

Belongs to the class I-like SAM-binding methyltransferase superfamily. rRNA adenine N(6)-methyltransferase family. RsmA subfamily.

It is found in the cytoplasm. The enzyme catalyses adenosine(1518)/adenosine(1519) in 16S rRNA + 4 S-adenosyl-L-methionine = N(6)-dimethyladenosine(1518)/N(6)-dimethyladenosine(1519) in 16S rRNA + 4 S-adenosyl-L-homocysteine + 4 H(+). In terms of biological role, specifically dimethylates two adjacent adenosines (A1518 and A1519) in the loop of a conserved hairpin near the 3'-end of 16S rRNA in the 30S particle. May play a critical role in biogenesis of 30S subunits. This Arthrobacter sp. (strain FB24) protein is Ribosomal RNA small subunit methyltransferase A.